Consider the following 498-residue polypeptide: Elastase (498 aa).

The N-terminal stretch at 1 to 23 (MKKVSTLDLLFVAIMGVSPAAFA) is a signal peptide. Residues 24–197 (ADLIDVSKLP…VLDQWEGLAH (174 aa)) constitute a propeptide that is removed on maturation. A disulfide bridge links C227 with C255. D333 lines the Ca(2+) pocket. H337 serves as a coordination point for Zn(2+). Residue E338 is part of the active site. Residues H341 and E361 each coordinate Zn(2+). Ca(2+) contacts are provided by E369, E372, D380, and L382. H420 functions as the Proton donor in the catalytic mechanism. An intrachain disulfide couples C467 to C494.

This sequence belongs to the peptidase M4 family. Monomer. Requires Ca(2+) as cofactor. Zn(2+) serves as cofactor. Post-translationally, made as a membrane-associated pre-pro-protein, which is exported to the periplasm (yielding pro-elastase) with removal of the signal peptide. Under certain conditions pro-elastase can accumulate. The pro-peptide is removed in the periplasm yielding a (mature length) 33 kDa protein, probably by autocatalysis. The pro-peptide probably remains associated with elastase and can be secreted. Further alterations (perhaps processing) seems to be required before secretion into the extracellular space.

It is found in the secreted. It carries out the reaction Hydrolysis of proteins including elastin, collagen types III and IV, fibronectin and immunoglobulin A, generally with bulky hydrophobic group at P1'. Insulin B chain cleavage pattern identical to that of thermolysin, but specificity differs in other respects.. With respect to regulation, inhibited by phosphoramidon. Functionally, cleaves host elastin, collagen, IgG, and several complement components as well as endogenous pro-aminopeptidase. Autocatalyses processing of its pro-peptide. Processes the pro-peptide of pro-chitin-binding protein (cbpD). Involved in the pathogenesis of P.aeruginosa infections. The sequence is that of Elastase (lasB) from Pseudomonas aeruginosa (strain ATCC 15692 / DSM 22644 / CIP 104116 / JCM 14847 / LMG 12228 / 1C / PRS 101 / PAO1).